Consider the following 176-residue polypeptide: Membrane-anchored junction protein (176 aa).

The Nuclear portion of the chain corresponds to 1–151; that stretch reads MSLKPFTYPF…QHNSPPPKER (151 aa). Positions 59 to 150 are disordered; it reads AVMRKRKHMD…LQHNSPPPKE (92 aa). Over residues 95 to 107 the composition is skewed to basic and acidic residues; the sequence is PPVETRRNRERKT. A compositionally biased stretch (polar residues) spans 108-120; it reads QQGLQETLASDIT. The helical transmembrane segment at 152–170 threads the bilayer; the sequence is AATGFFGFLSSLFPFRYFF. Over 171 to 176 the chain is Perinuclear space; the sequence is RKSSHS.

This sequence belongs to the MAJIN family. As to quaternary structure, component of the MAJIN-TERB1-TERB2 complex, composed of MAJIN, TERB1 and TERB2.

It is found in the nucleus inner membrane. It localises to the chromosome. Its subcellular location is the telomere. Meiosis-specific telomere-associated protein involved in meiotic telomere attachment to the nucleus inner membrane, a crucial step for homologous pairing and synapsis. Component of the MAJIN-TERB1-TERB2 complex, which promotes telomere cap exchange by mediating attachment of telomeric DNA to the inner nuclear membrane and replacement of the protective cap of telomeric chromosomes: in early meiosis, the MAJIN-TERB1-TERB2 complex associates with telomeric DNA and the shelterin/telosome complex. During prophase, the complex matures and promotes release of the shelterin/telosome complex from telomeric DNA. In the complex, MAJIN acts as the anchoring subunit to the nucleus inner membrane. MAJIN shows DNA-binding activity, possibly for the stabilization of telomere attachment on the nucleus inner membrane. The chain is Membrane-anchored junction protein from Homo sapiens (Human).